A 207-amino-acid chain; its full sequence is Transcription factor DYT1 (207 aa).

Residues 1–38 are disordered; it reads MGGGSRFQEPVRMSRRKQVTKEKEEDENFKSPNLEAER. Positions 28–77 constitute a bHLH domain; it reads NFKSPNLEAERRRREKLHCRLMALRSHVPIVTNMTKASIVEDAITYIGEL.

In terms of assembly, homodimer. As to expression, mostly expressed in anthers, and, to a lower extent, in young inflorescences undergoing meiosis and siliques.

The protein resides in the nucleus. In terms of biological role, transcription factor. Involved in the control of tapetum development. Required for male fertility and pollen differentiation, especially during callose deposition. In Arabidopsis thaliana (Mouse-ear cress), this protein is Transcription factor DYT1.